Consider the following 406-residue polypeptide: Glucose-6-phosphate isomerase (406 aa).

Glutamate 259 acts as the Proton donor in catalysis. Residues histidine 284 and lysine 397 contribute to the active site.

This sequence belongs to the GPI family.

It is found in the cytoplasm. It carries out the reaction alpha-D-glucose 6-phosphate = beta-D-fructose 6-phosphate. The protein operates within carbohydrate biosynthesis; gluconeogenesis. Its pathway is carbohydrate degradation; glycolysis; D-glyceraldehyde 3-phosphate and glycerone phosphate from D-glucose: step 2/4. In terms of biological role, catalyzes the reversible isomerization of glucose-6-phosphate to fructose-6-phosphate. This chain is Glucose-6-phosphate isomerase, found in Campylobacter jejuni subsp. jejuni serotype O:2 (strain ATCC 700819 / NCTC 11168).